The following is a 97-amino-acid chain: Large ribosomal subunit protein bL27 (97 aa).

Positions 1–12 (MIKLNLSNLQHF) are excised as a propeptide. Positions 13 to 38 (AHKKGGGSTSNGRDSQAKRLGAKAAD) are disordered.

It belongs to the bacterial ribosomal protein bL27 family. The N-terminus is cleaved by ribosomal processing cysteine protease Prp.

The protein is Large ribosomal subunit protein bL27 of Streptococcus equi subsp. equi (strain 4047).